The sequence spans 102 residues: Putative pterin-4-alpha-carbinolamine dehydratase (102 aa).

This sequence belongs to the pterin-4-alpha-carbinolamine dehydratase family.

It carries out the reaction (4aS,6R)-4a-hydroxy-L-erythro-5,6,7,8-tetrahydrobiopterin = (6R)-L-erythro-6,7-dihydrobiopterin + H2O. The chain is Putative pterin-4-alpha-carbinolamine dehydratase from Burkholderia orbicola (strain MC0-3).